Here is a 165-residue protein sequence, read N- to C-terminus: Large ribosomal subunit protein uL15 (165 aa).

Over residues 1 to 30 the composition is skewed to basic residues; that stretch reads MTNKKRRQRGSRTHGGGTHKNRRGAGHRGG. 2 disordered regions span residues 1-39 and 137-165; these read MTNK…RAKH and AGGE…DDEA. Acidic residues predominate over residues 150–165; the sequence is AADESENTSDDEDDEA.

This sequence belongs to the universal ribosomal protein uL15 family. Part of the 50S ribosomal subunit.

Functionally, binds to the 23S rRNA. The polypeptide is Large ribosomal subunit protein uL15 (Halorubrum lacusprofundi (strain ATCC 49239 / DSM 5036 / JCM 8891 / ACAM 34)).